We begin with the raw amino-acid sequence, 307 residues long: Elongation factor Ts (307 aa).

Residues 79 to 82 (TDFV) form an involved in Mg(2+) ion dislocation from EF-Tu region.

It belongs to the EF-Ts family.

It localises to the cytoplasm. Its function is as follows. Associates with the EF-Tu.GDP complex and induces the exchange of GDP to GTP. It remains bound to the aminoacyl-tRNA.EF-Tu.GTP complex up to the GTP hydrolysis stage on the ribosome. This chain is Elongation factor Ts, found in Bartonella tribocorum (strain CIP 105476 / IBS 506).